A 198-amino-acid chain; its full sequence is Suppressor of cytokine signaling 2 (198 aa).

Positions 1–29 (MTLRCLEPSGNGGEGTRSQWGTAGSAEEP) are disordered. An interaction with AREL1 region spans residues 1–75 (MTLRCLEPSG…PEGTFLIRDS (75 aa)). The residue at position 30 (S30) is a Phosphoserine. The 109-residue stretch at 48–156 (WYWGSMTVNE…TVHLYLTKPL (109 aa)) folds into the SH2 domain. S52 is subject to Phosphoserine; by PKC. Residues 151–197 (YLTKPLYTSAPSLQHLCRLTINKCTGAIWGLPLPTRLKDYLEEYKFQ) enclose the SOCS box domain. A Glycyl lysine isopeptide (Lys-Gly) (interchain with G-Cter in ubiquitin) cross-link involves residue K173.

Substrate-recognition component of the ECS(SOCS2) complex, composed of SOCS2, CUL5, ELOB, ELOC and RNF7/RBX2. Interacts with IGF1R. Interacts with DCUN1D1. Ubiquitinated; mediated by AREL1 and leading to its subsequent proteasomal degradation. Ubiquitination is dependent on its phosphorylation at Ser-52, by PKC. Ubiquitination is stimulated by LPS. In terms of processing, phosphorylation at Ser-52 by PKC facilitates its ubiquitination and proteasomal degradation. As to expression, high expression in heart, placenta, lung, kidney and prostate. Predominantly expressed in pulmonary epithelia cells, specifically type II pneumocytes.

The protein resides in the cytoplasm. It functions in the pathway protein modification; protein ubiquitination. With respect to regulation, substrate-binding is prevented by the covalent inhibitor MN551 that cross-links with Cys-111. Also inhibited by a MN551 derivative, MN714, which contains a pivaloyloxymethyl that allows cell permeability. Its function is as follows. Substrate-recognition component of a cullin-5-RING E3 ubiquitin-protein ligase complex (ECS complex, also named CRL5 complex), which mediates the ubiquitination and subsequent proteasomal degradation of target proteins, such as EPOR and GHR. Specifically recognizes and binds phosphorylated proteins via its SH2 domain, promoting their ubiquitination. The ECS(SOCS2) complex acts as a key regulator of growth hormone receptor (GHR) levels by mediating ubiquitination and degradation of GHR, following GHR phosphorylation by JAK2. The ECS(SOCS2) also catalyzes ubiquitination and degradation of JAK2-phosphorylated EPOR. The chain is Suppressor of cytokine signaling 2 from Homo sapiens (Human).